We begin with the raw amino-acid sequence, 31 residues long: Photosystem II reaction center protein T (31 aa).

The helical transmembrane segment at 3 to 23 threads the bilayer; that stretch reads SFAYILILGLAIATLFFAIAF.

The protein belongs to the PsbT family. PSII is composed of 1 copy each of membrane proteins PsbA, PsbB, PsbC, PsbD, PsbE, PsbF, PsbH, PsbI, PsbJ, PsbK, PsbL, PsbM, PsbT, PsbX, PsbY, PsbZ, Psb30/Ycf12, peripheral proteins PsbO, CyanoQ (PsbQ), PsbU, PsbV and a large number of cofactors. It forms dimeric complexes.

It is found in the cellular thylakoid membrane. Its function is as follows. Found at the monomer-monomer interface of the photosystem II (PS II) dimer, plays a role in assembly and dimerization of PSII. PSII is a light-driven water plastoquinone oxidoreductase, using light energy to abstract electrons from H(2)O, generating a proton gradient subsequently used for ATP formation. This Synechococcus sp. (strain CC9311) protein is Photosystem II reaction center protein T.